A 454-amino-acid polypeptide reads, in one-letter code: MTTKIKTQWTCTECGTHSPKWLGQCSGCLQWNTLVEERTAPKLNTSSYSSSSSIPIPLNNVEFQEEIRIHTQAQGWNRLLGGGTVRGSLALLGGEPGIGKSTLLLQISSQFAAAGHKVLYVCGEESVSQTSLRAQRLQISSNNIFLFPETNLEDIKQQIDNIAPDILVIDSIQIIFSPSLSSAPGSVAQVRETTAELMHIAKQKQITTFIIGHVTKSGEIAGPRILEHLVDTVLYFEGNAHANYRMIRSVKNRFGPTNELLILSMHTDGLREVENPSGLFLQEKIVETTGSTIIPIVEGSETLLIEVQALVSSSPFSNPVRKTSGFDPNRFSLLLAVLEKRANVKLYTSDVFLSIAGGLKITQPSADLGAVLSVVSSLYNRYLPKNYTYTGEIGLGGEIRHVSHMEHRIKESIIMGFKGIVMPFGQIKGLPKEFLDQIDIIGVKTIKDAVRLLQ.

The C4-type zinc finger occupies 11–28; it reads CTECGTHSPKWLGQCSGC. Position 94 to 101 (94 to 101) interacts with ATP; the sequence is GEPGIGKS. The short motif at 251–255 is the RadA KNRFG motif element; it reads KNRFG. The lon-protease-like stretch occupies residues 350–454; sequence DVFLSIAGGL…TIKDAVRLLQ (105 aa).

This sequence belongs to the RecA family. RadA subfamily.

DNA-dependent ATPase involved in processing of recombination intermediates, plays a role in repairing DNA breaks. Stimulates the branch migration of RecA-mediated strand transfer reactions, allowing the 3' invading strand to extend heteroduplex DNA faster. Binds ssDNA in the presence of ADP but not other nucleotides, has ATPase activity that is stimulated by ssDNA and various branched DNA structures, but inhibited by SSB. Does not have RecA's homology-searching function. The chain is DNA repair protein RadA from Chlamydia trachomatis serovar D (strain ATCC VR-885 / DSM 19411 / UW-3/Cx).